We begin with the raw amino-acid sequence, 673 residues long: Putative transcription factor tau subunit sfc9 (673 aa).

In terms of assembly, may be a component of the TFIIIC complex.

It is found in the nucleus. The protein is Putative transcription factor tau subunit sfc9 of Schizosaccharomyces pombe (strain 972 / ATCC 24843) (Fission yeast).